The primary structure comprises 454 residues: uncharacterized protein (454 aa).

The signal sequence occupies residues 1 to 21 (MKYKTVKSIPLFLLGSIVFTA). Cys22 is lipidated: N-palmitoyl cysteine. A lipid anchor (S-diacylglycerol cysteine) is attached at Cys22. Residues 55 to 64 (ASSSSSTTTS) show a composition bias toward low complexity. Residues 55–87 (ASSSSSTTTSNDDNNQKGYFLETNRSTGTYDPN) are disordered. Over residues 65-87 (NDDNNQKGYFLETNRSTGTYDPN) the composition is skewed to polar residues.

The protein resides in the cell membrane. This is an uncharacterized protein from Mycoplasma pneumoniae (strain ATCC 29342 / M129 / Subtype 1) (Mycoplasmoides pneumoniae).